The following is a 446-amino-acid chain: Ribosomal protein uS12 methylthiotransferase RimO (446 aa).

The MTTase N-terminal domain occupies 4–119 (YKVGMVSLGC…IDKVIKEFIE (116 aa)). [4Fe-4S] cluster is bound by residues Cys13, Cys48, Cys82, Cys157, Cys161, and Cys164. The 231-residue stretch at 143–373 (TTQKESAYIR…MLSQEKISND (231 aa)) folds into the Radical SAM core domain. The 67-residue stretch at 376 to 442 (KLKVNKKYDI…DYDLIGVVED (67 aa)) folds into the TRAM domain.

It belongs to the methylthiotransferase family. RimO subfamily. It depends on [4Fe-4S] cluster as a cofactor.

Its subcellular location is the cytoplasm. It carries out the reaction L-aspartate(89)-[ribosomal protein uS12]-hydrogen + (sulfur carrier)-SH + AH2 + 2 S-adenosyl-L-methionine = 3-methylsulfanyl-L-aspartate(89)-[ribosomal protein uS12]-hydrogen + (sulfur carrier)-H + 5'-deoxyadenosine + L-methionine + A + S-adenosyl-L-homocysteine + 2 H(+). Catalyzes the methylthiolation of an aspartic acid residue of ribosomal protein uS12. This is Ribosomal protein uS12 methylthiotransferase RimO from Clostridium botulinum (strain Eklund 17B / Type B).